A 158-amino-acid polypeptide reads, in one-letter code: Small ribosomal subunit protein uS7 (158 aa).

Belongs to the universal ribosomal protein uS7 family. In terms of assembly, part of the 30S ribosomal subunit. Contacts proteins S9 and S11.

Its function is as follows. One of the primary rRNA binding proteins, it binds directly to 16S rRNA where it nucleates assembly of the head domain of the 30S subunit. Is located at the subunit interface close to the decoding center, probably blocks exit of the E-site tRNA. The polypeptide is Small ribosomal subunit protein uS7 (Porphyromonas gingivalis (strain ATCC 33277 / DSM 20709 / CIP 103683 / JCM 12257 / NCTC 11834 / 2561)).